Reading from the N-terminus, the 348-residue chain is MLNPALEHIETYKVEGGQEAEVKLNQNENPFDLPSWLKDKILDQFRHEPWNRYPDILPYRGMAAYASFLGVKPELVIMSNGSNEMLYTIFMACLGAGRKVLIPEPSFSLYDKLARLQQAGVVEVPMHDDLSFDVDAIIEAARREKVDFIVLSTPNNPTSKSLSHDEIERIVEAADAIVLVDEAYVEFSREQSALDLIDRYPNLIVLRTMSKALALAGMRIGFAIANPELLAEISKPKIPFASSRLAEITLMAVLENYSLVTDAVQYILAERGRIEAELTEIPGIHTFESDTNFLIIRVANASEVFRKLKNAGVLVRNVSGYPLMENCLRFNVGLREENDRLLELLKKL.

N6-(pyridoxal phosphate)lysine is present on Lys-211.

It belongs to the class-II pyridoxal-phosphate-dependent aminotransferase family. Histidinol-phosphate aminotransferase subfamily. As to quaternary structure, homodimer. Pyridoxal 5'-phosphate is required as a cofactor.

It catalyses the reaction L-histidinol phosphate + 2-oxoglutarate = 3-(imidazol-4-yl)-2-oxopropyl phosphate + L-glutamate. It participates in amino-acid biosynthesis; L-histidine biosynthesis; L-histidine from 5-phospho-alpha-D-ribose 1-diphosphate: step 7/9. This is Histidinol-phosphate aminotransferase from Chlorobaculum tepidum (strain ATCC 49652 / DSM 12025 / NBRC 103806 / TLS) (Chlorobium tepidum).